The sequence spans 219 residues: Predicted GPI-anchored protein 6 (219 aa).

An N-terminal signal peptide occupies residues 1–19 (MQFQTLLVVAGSLVASTLA). 3 N-linked (GlcNAc...) asparagine glycosylation sites follow: Asn-21, Asn-173, and Asn-188. Gly-194 carries GPI-anchor amidated glycine lipidation. Residues 195-219 (GAVGGASNQITVGFAAIAGLAAILL) constitute a propeptide, removed in mature form.

This sequence belongs to the flocculin family. The GPI-anchor is attached to the protein in the endoplasmic reticulum and serves to target the protein to the cell surface. There, the glucosamine-inositol phospholipid moiety is cleaved off and the GPI-modified mannoprotein is covalently attached via its lipidless GPI glycan remnant to the 1,6-beta-glucan of the outer cell wall layer.

It localises to the secreted. The protein localises to the cell wall. The protein resides in the membrane. In terms of biological role, probable cell wall protein that participates directly in adhesive cell-cell interactions. The protein is Predicted GPI-anchored protein 6 (PGA6) of Candida albicans (strain SC5314 / ATCC MYA-2876) (Yeast).